Here is a 271-residue protein sequence, read N- to C-terminus: Ferric vulnibactin reductase VuuB (271 aa).

In terms of domain architecture, FAD-binding FR-type spans valine 8–isoleucine 131.

The protein belongs to the SIP oxidoreductase family. Monomer. The cofactor is FAD.

It localises to the cytoplasm. The catalysed reaction is 2 a Fe(II)-siderophore + NAD(+) + H(+) = 2 a Fe(III)-siderophore + NADH. Ferric-siderophore reductase involved in iron removal from the siderophores after their transport into the cell. Acts as a major ferric-vulnibactin reductase catalyzing the reduction of Fe(3+)-vulnibactin, a catecholate siderophore synthesized by V.vulnificus. The sequence is that of Ferric vulnibactin reductase VuuB from Vibrio vulnificus (strain CMCP6).